A 201-amino-acid chain; its full sequence is Recombination protein RecR (201 aa).

A C4-type zinc finger spans residues 60–75 (CHECGNVDTSDPCTIC). One can recognise a Toprim domain in the interval 83–178 (SILVVVEDVS…KVTKLAHGVP (96 aa)).

Belongs to the RecR family.

In terms of biological role, may play a role in DNA repair. It seems to be involved in an RecBC-independent recombinational process of DNA repair. It may act with RecF and RecO. This chain is Recombination protein RecR, found in Methylobacterium nodulans (strain LMG 21967 / CNCM I-2342 / ORS 2060).